A 232-amino-acid polypeptide reads, in one-letter code: MLKLTDITWLYHHLPMRFSLTVERGEQVAILGPSGAGKSTLLNLIAGFLTPASGSLTIDSVDHTTTPPSRRPVSMLFQENNLFSHLTVAQNIGLGLNPGLKLNAAQQEKMHAIARQMGIDNLMARLPGELSGGQRQRVALARCLVREQPILLLDEPFSALDPALRQEMLTLVSTSCQQQKMTLLMVSHSVEDAARIATRSVVVADGRIAWQGKTDELLSGKASASALLGITG.

One can recognise an ABC transporter domain in the interval 2-230; sequence LKLTDITWLY…KASASALLGI (229 aa). 32–39 is a binding site for ATP; it reads GPSGAGKS.

It belongs to the ABC transporter superfamily. Thiamine importer (TC 3.A.1.19.1) family. In terms of assembly, the complex is composed of two ATP-binding proteins (ThiQ), two transmembrane proteins (ThiP) and a solute-binding protein (ThiB).

Its subcellular location is the cell inner membrane. It catalyses the reaction thiamine(out) + ATP + H2O = thiamine(in) + ADP + phosphate + H(+). Its function is as follows. Part of the ABC transporter complex ThiBPQ involved in thiamine import. Responsible for energy coupling to the transport system. This chain is Thiamine import ATP-binding protein ThiQ, found in Shigella sonnei (strain Ss046).